Consider the following 706-residue polypeptide: Kinesin-like protein KIP2 (706 aa).

Composition is skewed to low complexity over residues M1 to S28 and S36 to S63. Residues M1–S139 are disordered. Positions S102–V493 constitute a Kinesin motor domain. Polar residues predominate over residues R127–S139. G202–T209 is a binding site for ATP. Residues V413–Y445 are disordered. Over residues G414–N441 the composition is skewed to low complexity. 3 coiled-coil regions span residues N507–E541, M569–K589, and T612–K689.

This sequence belongs to the TRAFAC class myosin-kinesin ATPase superfamily. Kinesin family. Might be dimeric.

The protein localises to the cytoplasm. It localises to the cytoskeleton. In terms of biological role, required for assembly of the mitotic spindle. The chain is Kinesin-like protein KIP2 (KIP2) from Saccharomyces cerevisiae (strain ATCC 204508 / S288c) (Baker's yeast).